A 314-amino-acid chain; its full sequence is uncharacterized protein (314 aa).

Positions 1–24 (MKRRRRWRGWLLFPALCFCLLCEA) are cleaved as a signal peptide. N-linked (GlcNAc...) asparagine; by host glycosylation is found at N28, N43, N57, N77, N101, N102, N109, N151, N170, N217, N223, N252, N255, and N268. The span at 47–114 (ATTGTTTTSP…TIGTNATSPS (68 aa)) shows a compositional bias: low complexity. The segment at 47-116 (ATTGTTTTSP…GTNATSPSPS (70 aa)) is disordered.

Belongs to the HHV-5 UL116 protein family. In terms of assembly, interacts with gH. Interacts with UL148. Highly glycosylated.

The protein resides in the virion. The protein localises to the host endoplasmic reticulum. Chaperone protein that cooperates with UL148 to regulate the abundance of gH complexes in virion. First interactor of gH in the host endoplasmic reticulum, regulates the early folding steps of virion assembly. Then, UL148 is recruited and favors the binding of gL. This is an uncharacterized protein from Homo sapiens (Human).